A 536-amino-acid polypeptide reads, in one-letter code: Formate--tetrahydrofolate ligase (536 aa).

Residue 51–58 (TPAGEGKT) coordinates ATP.

It belongs to the formate--tetrahydrofolate ligase family.

It carries out the reaction (6S)-5,6,7,8-tetrahydrofolate + formate + ATP = (6R)-10-formyltetrahydrofolate + ADP + phosphate. It participates in one-carbon metabolism; tetrahydrofolate interconversion. The protein is Formate--tetrahydrofolate ligase of Thermoplasma acidophilum (strain ATCC 25905 / DSM 1728 / JCM 9062 / NBRC 15155 / AMRC-C165).